A 214-amino-acid polypeptide reads, in one-letter code: Probable transaldolase (214 aa).

Lys83 serves as the catalytic Schiff-base intermediate with substrate.

The protein belongs to the transaldolase family. Type 3B subfamily.

Its subcellular location is the cytoplasm. It carries out the reaction D-sedoheptulose 7-phosphate + D-glyceraldehyde 3-phosphate = D-erythrose 4-phosphate + beta-D-fructose 6-phosphate. It functions in the pathway carbohydrate degradation; pentose phosphate pathway; D-glyceraldehyde 3-phosphate and beta-D-fructose 6-phosphate from D-ribose 5-phosphate and D-xylulose 5-phosphate (non-oxidative stage): step 2/3. In terms of biological role, transaldolase is important for the balance of metabolites in the pentose-phosphate pathway. The chain is Probable transaldolase from Geotalea uraniireducens (strain Rf4) (Geobacter uraniireducens).